Consider the following 340-residue polypeptide: Protein B17 (340 aa).

The protein belongs to the orthopoxvirus B17 protein family.

This Vaccinia virus (strain Copenhagen) (VACV) protein is Protein B17.